The primary structure comprises 1063 residues: Lysine-specific demethylase phf2 (1063 aa).

Residues 5–56 form a PHD-type zinc finger; it reads PVYCICRLPYDVTQFMIECDACKDWFHGSCVGVDEDEAPDIDIYHCPNCEKT. The region spanning 197 to 353 is the JmjC domain; that stretch reads FSDARMANIV…MQMRAYEVEK (157 aa). Thr-246 is a binding site for 2-oxoglutarate. 2 residues coordinate Fe cation: His-249 and Glu-251. 2 residues coordinate 2-oxoglutarate: Tyr-259 and Lys-266. A Fe cation-binding site is contributed by Asn-321. 4 disordered regions span residues 448–546, 704–761, 773–864, and 879–1045; these read VSDS…LAAL, NIKE…SAGI, GIDY…DMFD, and YVYP…MATA. Residues 460–477 show a composition bias toward low complexity; sequence SEPSNSKPPAEEPPSALS. Composition is skewed to basic and acidic residues over residues 513–540 and 723–745; these read PPKE…EKKP and KSPD…DVKG. Basic residues predominate over residues 746–755; it reads RNSKVSKKKG. A compositionally biased stretch (polar residues) spans 776-791; it reads YSNNSQPPASPSTQEA. Low complexity predominate over residues 813–833; that stretch reads SNSQAKNNSHSSAASKKPSGA. Over residues 842–852 the composition is skewed to basic residues; the sequence is RPAKRLPKKTQ. Residues 920–929 are compositionally biased toward basic and acidic residues; sequence RQERPAREGA. Residues 953–964 show a composition bias toward basic residues; it reads IKKKKKSAKKKP. The segment covering 965–975 has biased composition (basic and acidic residues); that stretch reads IVAEESHKLSH. Low complexity-rich tracts occupy residues 976 to 988 and 1021 to 1031; these read DSSS…DSES and SSSSSSQNASS. Ser-1021 carries the post-translational modification Phosphoserine; by PKA.

This sequence belongs to the JHDM1 histone demethylase family. JHDM1D subfamily.

It is found in the nucleus. It localises to the nucleolus. Its subcellular location is the chromosome. The protein localises to the centromere. The protein resides in the kinetochore. Functionally, lysine demethylase that demethylates both histones and non-histone proteins. Mediates demethylation of dimethylated 'Lys-9' of histone H3 (H3K9me2). Recruited to trimethylated 'Lys-4' of histone H3 (H3K4me3) at rDNA promoters and promotes expression of rDNA. This Danio rerio (Zebrafish) protein is Lysine-specific demethylase phf2 (phf2).